A 397-amino-acid polypeptide reads, in one-letter code: MDFNAGVPMSSLSPLMNQDAMWQMNLSSDETMETGSYPERPGEPDCSYYIRTGLCRFGSTCRFNHPRDRELVIATARMRGEYPERIGQPECEYYLKTGTCKFGVTCKFHHPRNKAGIAGRVSLNMLGYPLRSNEVDCAYFLRTGHCKFGGTCKFNHPQPQPTNMMVPTSGQQSYPWSRASFIASPRWQDPSSYASLIMPQGVVPVQGWNPYSGQLGSVSPSGTGNDQNYRNLQQNETIESGSQSQGSFSGYNPGSSVPLGGYYALPRENVFPERPGQPECQFYMKTGDCKFGTVCKFHHPRDRQAPPPDCLLSSIGLPLRPGEPLCVFYTRYGICKFGPSCKFDHPMRVFTYDNTASETDEVVETSTGKSRRLSVSETRQAATTSSGKDTTIDNTQQ.

5 consecutive C3H1-type zinc fingers follow at residues 40-68 (RPGEPDCSYYIRTGLCRFGSTCRFNHPRD), 85-113 (RIGQPECEYYLKTGTCKFGVTCKFHHPRN), 131-159 (RSNEVDCAYFLRTGHCKFGGTCKFNHPQP), 274-302 (RPGQPECQFYMKTGDCKFGTVCKFHHPRD), and 320-348 (RPGEPLCVFYTRYGICKFGPSCKFDHPMR). The interval 361–397 (EVVETSTGKSRRLSVSETRQAATTSSGKDTTIDNTQQ) is disordered. Over residues 364–397 (ETSTGKSRRLSVSETRQAATTSSGKDTTIDNTQQ) the composition is skewed to polar residues.

The protein resides in the nucleus. The protein is Zinc finger CCCH domain-containing protein 33 (ZFN1) of Arabidopsis thaliana (Mouse-ear cress).